The chain runs to 110 residues: Large ribosomal subunit protein uL24 (110 aa).

It belongs to the universal ribosomal protein uL24 family. Part of the 50S ribosomal subunit.

Its function is as follows. One of two assembly initiator proteins, it binds directly to the 5'-end of the 23S rRNA, where it nucleates assembly of the 50S subunit. Functionally, one of the proteins that surrounds the polypeptide exit tunnel on the outside of the subunit. This Ureaplasma parvum serovar 3 (strain ATCC 27815 / 27 / NCTC 11736) protein is Large ribosomal subunit protein uL24.